We begin with the raw amino-acid sequence, 101 residues long: uncharacterized protein (101 aa).

This is an uncharacterized protein from Methanocaldococcus jannaschii (strain ATCC 43067 / DSM 2661 / JAL-1 / JCM 10045 / NBRC 100440) (Methanococcus jannaschii).